We begin with the raw amino-acid sequence, 243 residues long: Type III pantothenate kinase (243 aa).

6-13 (DIGNTVAK) serves as a coordination point for ATP. Residues Tyr86 and 93–96 (GYDR) each bind substrate. Asp95 functions as the Proton acceptor in the catalytic mechanism. Asp116 serves as a coordination point for K(+). Thr119 contacts ATP. Thr171 provides a ligand contact to substrate.

Belongs to the type III pantothenate kinase family. As to quaternary structure, homodimer. Requires NH4(+) as cofactor. K(+) is required as a cofactor.

It is found in the cytoplasm. The catalysed reaction is (R)-pantothenate + ATP = (R)-4'-phosphopantothenate + ADP + H(+). It participates in cofactor biosynthesis; coenzyme A biosynthesis; CoA from (R)-pantothenate: step 1/5. Catalyzes the phosphorylation of pantothenate (Pan), the first step in CoA biosynthesis. The sequence is that of Type III pantothenate kinase from Bacteroides fragilis (strain ATCC 25285 / DSM 2151 / CCUG 4856 / JCM 11019 / LMG 10263 / NCTC 9343 / Onslow / VPI 2553 / EN-2).